The following is a 440-amino-acid chain: Exodeoxyribonuclease 7 large subunit (440 aa).

It belongs to the XseA family. Heterooligomer composed of large and small subunits.

It localises to the cytoplasm. It catalyses the reaction Exonucleolytic cleavage in either 5'- to 3'- or 3'- to 5'-direction to yield nucleoside 5'-phosphates.. Bidirectionally degrades single-stranded DNA into large acid-insoluble oligonucleotides, which are then degraded further into small acid-soluble oligonucleotides. The protein is Exodeoxyribonuclease 7 large subunit of Ralstonia nicotianae (strain ATCC BAA-1114 / GMI1000) (Ralstonia solanacearum).